Consider the following 1122-residue polypeptide: Midnolin homolog (1122 aa).

A Ubiquitin-like domain is found at 69-143; it reads INLNISTTTG…IILIPNVETG (75 aa). The required for interaction with Pc stretch occupies residues 210–300; that stretch reads GGASGSSINA…SGQRSSGRIG (91 aa). 8 disordered regions span residues 257–399, 596–630, 645–677, 746–775, 840–876, 886–905, 922–955, and 1067–1122; these read VGGS…STLN, KHRH…HFFN, FATS…GAGA, GVVS…KSGS, APTT…RSKM, KCNS…ASGS, AATK…NGCT, and AAPA…DTAA. Over residues 266–298 the composition is skewed to low complexity; that stretch reads SGTSSSSSSTSSSSSSSSSSSRTRSSGQRSSGR. Composition is skewed to basic residues over residues 300 to 310 and 321 to 352; these read GHGHVHSHQHP and SHGH…HHHN. Residues 375–397 are compositionally biased toward low complexity; the sequence is PSSSGASGSAPATGTGQSQSSST. Residues 596–610 are compositionally biased toward basic residues; that stretch reads KHRHYHGQGHGHGHG. Composition is skewed to low complexity over residues 612–627, 648–663, 746–766, 856–867, 889–903, and 922–936; these read GHSS…SSSH, SSSS…SSSP, GVVS…AASG, SGSSSTTSSGSG, SRAQ…TLAS, and AATK…SSHS. 2 stretches are compositionally biased toward polar residues: residues 937-954 and 1071-1085; these read CCQT…SNGC and NSIT…VNGN. The segment covering 1086-1107 has biased composition (low complexity); it reads TSTAPATAATSAAAAPTAAPPS.

As to quaternary structure, interacts with PRC1 complex member polycomb protein Pc; the interaction targets Pc for ubiquitin-independent proteasomal degradation. Does not interact with PRC1 members Ph, Psc or Sce so does not appear to be a member of the PRC1 complex. Interacts with 26S proteasome regulatory subunit Rpn10.

Its subcellular location is the nucleus. In terms of biological role, facilitates ubiquitin-independent proteasomal degradation of polycomb protein Pc by interacting directly with the proteasome and recruiting Pc to it. The polypeptide is Midnolin homolog (Drosophila melanogaster (Fruit fly)).